The chain runs to 110 residues: Multidrug transporter EmrE (110 aa).

Transmembrane regions (helical) follow at residues 4 to 21, 34 to 52, 58 to 80, and 87 to 104; these read YIYLGGAILAEVIGTTLM, VGTIICYCASFWLLAQTLA, IAYAIWSGVGIVLISLLSWGFFG, and AIIGMMLICAGVLIINLL.

It belongs to the drug/metabolite transporter (DMT) superfamily. Small multidrug resistance (SMR) (TC 2.A.7.1) family. As to quaternary structure, homodimer. Forms an antiparallel dimeric structure. Also forms dimers of homodimers.

It is found in the cell inner membrane. With respect to regulation, substrate identity influences both the ground-state and transition-state energies for the conformational exchange process, emphasizing the coupling between substrate binding and transport. Multidrug efflux protein that confers resistance to a wide range of toxic compounds, including ethidium, methyl viologen, acriflavine, tetraphenylphosphonium (TPP(+)), benzalkonium, propidium, dequalinium and the aminoglycoside antibiotics streptomycin and tobramycin. Can also transport the osmoprotectants betaine and choline. The drug efflux is coupled to an influx of protons. Can couple antiport of a drug to either one or two protons, performing both electrogenic and electroneutral transport of a single substrate. Simultaneously binds and cotransports proton and drug. The chain is Multidrug transporter EmrE (emrE) from Escherichia coli (strain K12).